A 243-amino-acid polypeptide reads, in one-letter code: Uridylate kinase (243 aa).

ATP is bound at residue 15–18; it reads KLSG. Residues 23–28 form an involved in allosteric activation by GTP region; the sequence is GEEGFG. Glycine 57 is a UMP binding site. Glycine 58 and arginine 62 together coordinate ATP. Residues aspartate 77 and 138-145 each bind UMP; that span reads TGNPFFTT. Threonine 165, phenylalanine 171, and aspartate 174 together coordinate ATP.

It belongs to the UMP kinase family. Homohexamer.

It is found in the cytoplasm. The catalysed reaction is UMP + ATP = UDP + ADP. The protein operates within pyrimidine metabolism; CTP biosynthesis via de novo pathway; UDP from UMP (UMPK route): step 1/1. Its activity is regulated as follows. Allosterically activated by GTP. Inhibited by UTP. Its function is as follows. Catalyzes the reversible phosphorylation of UMP to UDP. The protein is Uridylate kinase of Aliivibrio fischeri (strain ATCC 700601 / ES114) (Vibrio fischeri).